The chain runs to 858 residues: Adenylate cyclase, germination specific (858 aa).

The Cytoplasmic portion of the chain corresponds to 1 to 18; it reads MKKTFVKILSKSYVEGYP. A helical; Signal-anchor for type II membrane protein transmembrane segment spans residues 19-41; it reads VGFFIGLIILAIFGSMVCIFSFM. Over 42-858 the chain is Extracellular; the sequence is HYSEEENSNI…DENVESKKNK (817 aa). Positions 86–317 constitute a CHASE domain; that stretch reads VNPNFDRNDF…DCVLKLWIFT (232 aa). The region spanning 396–526 is the Guanylate cyclase domain; that stretch reads CVFFLDIAGF…DTVNVASRME (131 aa). Asp401, Ile402, and Asp445 together coordinate Mg(2+). 3 disordered regions span residues 650–691, 767–803, and 827–858; these read YYYH…YHDT, SDNV…STNE, and ENCD…KKNK. Low complexity-rich tracts occupy residues 767–778, 788–797, and 834–849; these read SDNVNNYENNNN, GDNNNINDNN, and DNNN…NNND.

It belongs to the adenylyl cyclase class-4/guanylyl cyclase family.

The protein localises to the membrane. It catalyses the reaction ATP = 3',5'-cyclic AMP + diphosphate. With respect to regulation, insensitive to guanine nucleotides. In terms of biological role, has a large extracellular domain which may be involved in the recognition of an extracellular signal present during germination, leading to activation or inhibition of cAMP synthesis by the cytoplasmic domain. The chain is Adenylate cyclase, germination specific (acgA) from Dictyostelium discoideum (Social amoeba).